The primary structure comprises 434 residues: Eukaryotic translation initiation factor 3 subunit E (434 aa).

In terms of domain architecture, PCI spans 219–392 (FFNHPKGRDL…GHVVMGTQPL (174 aa)).

The protein belongs to the eIF-3 subunit E family. As to quaternary structure, component of the eukaryotic translation initiation factor 3 (eIF-3) complex. The eIF-3 complex interacts with pix. Interacts with mxt.

Its subcellular location is the cytoplasm. Its function is as follows. Component of the eukaryotic translation initiation factor 3 (eIF-3) complex, which is involved in protein synthesis of a specialized repertoire of mRNAs and, together with other initiation factors, stimulates binding of mRNA and methionyl-tRNAi to the 40S ribosome. The eIF-3 complex specifically targets and initiates translation of a subset of mRNAs involved in cell proliferation. The chain is Eukaryotic translation initiation factor 3 subunit E (eIF3-S6) from Drosophila pseudoobscura pseudoobscura (Fruit fly).